The chain runs to 414 residues: Protein BTN1 (414 aa).

Positions 1-33 are cleaved as a signal peptide; the sequence is MQLLIPESRIVFASFFIFGLLNNILYVVILSAA. 5 helical membrane-spanning segments follow: residues 48 to 68, 74 to 94, 100 to 120, 137 to 157, and 159 to 179; these read LADI…VGLI, IWML…TSDE, IVGI…FLQL, TGGA…MLGM, and VWVV…AFYV. The interval 195 to 214 is disordered; that stretch reads EALDSLDERSDPSSNASFSS. 5 helical membrane passes run 242–262, 281–301, 306–326, 332–352, and 368–388; these read LCLV…TLLF, VYGF…SFGI, LYLL…QSVH, SVWL…FSYV, and EFSM…AGCI.

Belongs to the battenin family.

Its subcellular location is the vacuole membrane. Its function is as follows. Involved in vacuolar transport and vacuole pH homeostasis. Also required for cytokinesis. This chain is Protein BTN1 (BTN1), found in Debaryomyces hansenii (strain ATCC 36239 / CBS 767 / BCRC 21394 / JCM 1990 / NBRC 0083 / IGC 2968) (Yeast).